Here is a 350-residue protein sequence, read N- to C-terminus: D-alanine--D-alanine ligase (350 aa).

Residues 135–335 form the ATP-grasp domain; sequence KLYAKNLGVK…LAQSLPKTPK (201 aa). 164-219 contacts ATP; sequence KPSFNFPFIVKPNNAGSSLGVSVVKEEKELAYALDGAFEYSKEVLIEPFIQRVKEY. Residues aspartate 291, glutamate 303, and asparagine 305 each contribute to the Mg(2+) site.

This sequence belongs to the D-alanine--D-alanine ligase family. The cofactor is Mg(2+). Requires Mn(2+) as cofactor.

It localises to the cytoplasm. The enzyme catalyses 2 D-alanine + ATP = D-alanyl-D-alanine + ADP + phosphate + H(+). It functions in the pathway cell wall biogenesis; peptidoglycan biosynthesis. Functionally, cell wall formation. The polypeptide is D-alanine--D-alanine ligase (Helicobacter acinonychis (strain Sheeba)).